The chain runs to 329 residues: Ubiquitin carboxyl-terminal hydrolase isozyme L5 (329 aa).

Residues 7–225 (EWCLMESDPG…IRFNLMAIVS (219 aa)) enclose the UCH catalytic domain. Lysine 47 carries the post-translational modification N6-succinyllysine. The active-site Nucleophile is the cysteine 88. Lysine 158 carries the post-translational modification N6-acetyllysine. The Proton donor role is filled by histidine 164. Lysine 289 carries the N6-succinyllysine modification. The ULD domain maps to 291-319 (NYLPFIMELLKTLAEHQQLIPLVEKAKEK). Positions 313–329 (VEKAKEKQNAKKAQETK) are interaction with ADRM1.

It belongs to the peptidase C12 family. In terms of assembly, component of the 19S (PA700) regulatory complex of the 26S proteasome. Interacts with ADRM1 and NFRKB. Component of the INO80 complex; specifically part of a complex module associated with N-terminus of INO80.

Its subcellular location is the cytoplasm. The protein resides in the nucleus. The enzyme catalyses Thiol-dependent hydrolysis of ester, thioester, amide, peptide and isopeptide bonds formed by the C-terminal Gly of ubiquitin (a 76-residue protein attached to proteins as an intracellular targeting signal).. With respect to regulation, activated by ADRM1. Inhibited by interaction with NFRKB. Its function is as follows. Protease that specifically cleaves 'Lys-48'-linked polyubiquitin chains. Deubiquitinating enzyme associated with the 19S regulatory subunit of the 26S proteasome. Putative regulatory component of the INO80 complex; however is inactive in the INO80 complex and is activated by a transient interaction of the INO80 complex with the proteasome via ADRM1. The sequence is that of Ubiquitin carboxyl-terminal hydrolase isozyme L5 (UCHL5) from Sus scrofa (Pig).